Reading from the N-terminus, the 374-residue chain is MPNSGGEAPEMTVPAPIAMLAELTHRCPLACPYCSNPLALHGKARELDTQTWARAFDEAAALGVLQLHLSGGEPASRPDLVELTRAAHEAGLYTNLITSGIGLTPARLDALEAVGLDHIQLSLQGTTPDLADRIGGYKGGFARKMAVAAEIKARGIPLTLNAVMHRHNLDDLERTIELAIELGARRLEVACVQFHGWATRNRAALLPSRAQTEAAKRIVAEAEARLRGTLAFDFVPPDYYADYPKACMGGWGSAGLNIAPDGTVLPCHAAETIPHLSFDRFPDKTLREIWYEGAAFNAYRGTDHLPETCRSCDRVNIDFGGCRCQALALAGDPAATDPVCSRSPDHHKVTALLEAALAGGDGAEFTYRRMPRKG.

Positions 13–230 constitute a Radical SAM core domain; the sequence is VPAPIAMLAE…EAEARLRGTL (218 aa). Residues Cys-27, Cys-31, and Cys-34 each coordinate [4Fe-4S] cluster.

This sequence belongs to the radical SAM superfamily. PqqE family. Interacts with PqqD. The interaction is necessary for activity of PqqE. [4Fe-4S] cluster serves as cofactor.

The enzyme catalyses [PQQ precursor protein] + S-adenosyl-L-methionine = E-Y cross-linked-[PQQ precursor protein] + 5'-deoxyadenosine + L-methionine + H(+). It functions in the pathway cofactor biosynthesis; pyrroloquinoline quinone biosynthesis. Functionally, catalyzes the cross-linking of a glutamate residue and a tyrosine residue in the PqqA protein as part of the biosynthesis of pyrroloquinoline quinone (PQQ). In Ruegeria pomeroyi (strain ATCC 700808 / DSM 15171 / DSS-3) (Silicibacter pomeroyi), this protein is PqqA peptide cyclase.